Here is a 1044-residue protein sequence, read N- to C-terminus: Ras GTPase-activating protein 1 (1044 aa).

Position 1 is an N-acetylmethionine (Met1). Positions 1-160 (MMAAEAGGEE…DEGDSLDGPE (160 aa)) are hydrophobic. Positions 178–269 (WYHGKLDRTI…LKGEKLLYPV (92 aa)) constitute an SH2 1 domain. An SH3 domain is found at 276–338 (EDRRRVRAIL…VEDLVEEVGR (63 aa)). One can recognise an SH2 2 domain in the interval 348–438 (WFHGKISKQE…VEGYYLKEPV (91 aa)). The PH domain occupies 471–574 (NIVKKGYLLK…WMKGLQAFCN (104 aa)). In terms of domain architecture, C2 spans 574-687 (NLRKSSPGTS…QKGHATDEWF (114 aa)). Tyr612 bears the Phosphotyrosine mark. 2 consecutive repeats follow at residues 646-664 (PDIN…KSKD) and 665-683 (PDIL…GHAT). A Ras-GAP domain is found at 761 to 971 (KLESLLLCTL…HRMIMFLDEL (211 aa)). Ser828 is subject to Phosphoserine.

Interacts with SQSTM1. Interacts with SPSB1; the interaction does not promote degradation. Interacts with CAV2 (tyrosine phosphorylated form). Directly interacts with NCK1. Interacts with PDGFRB (tyrosine phosphorylated). Interacts (via SH2 domain) with the 'Tyr-9' phosphorylated form of PDPK1. Interacts with tyrosine-phosphorylated EPHB4. Phosphorylated by SRC and LCK. The phosphorylation SRC inhibits its ability to stimulate the Ras-GTPase activity, whereas phosphorylation by LCK does not display any effect on stimulation activity.

It localises to the cytoplasm. Inhibitory regulator of the Ras-cyclic AMP pathway. Stimulates the GTPase of normal but not oncogenic Ras p21. This Bos taurus (Bovine) protein is Ras GTPase-activating protein 1 (RASA1).